Reading from the N-terminus, the 155-residue chain is Ribonuclease H (155 aa).

One can recognise an RNase H type-1 domain in the interval 7–150 (AQNAVDLYTD…ADKLACKGRD (144 aa)). Positions 16, 54, 77, and 142 each coordinate Mg(2+).

Belongs to the RNase H family. In terms of assembly, monomer. The cofactor is Mg(2+).

The protein localises to the cytoplasm. It catalyses the reaction Endonucleolytic cleavage to 5'-phosphomonoester.. Functionally, endonuclease that specifically degrades the RNA of RNA-DNA hybrids. The polypeptide is Ribonuclease H (Saccharopolyspora erythraea (strain ATCC 11635 / DSM 40517 / JCM 4748 / NBRC 13426 / NCIMB 8594 / NRRL 2338)).